Reading from the N-terminus, the 130-residue chain is Small ribosomal subunit protein uS8 (130 aa).

It belongs to the universal ribosomal protein uS8 family. In terms of assembly, part of the 30S ribosomal subunit. Contacts proteins S5 and S12.

Its function is as follows. One of the primary rRNA binding proteins, it binds directly to 16S rRNA central domain where it helps coordinate assembly of the platform of the 30S subunit. The protein is Small ribosomal subunit protein uS8 of Vibrio cholerae serotype O1 (strain ATCC 39541 / Classical Ogawa 395 / O395).